A 214-amino-acid chain; its full sequence is Ribosomal protein uL16-like (214 aa).

The protein belongs to the universal ribosomal protein uL16 family. In terms of assembly, component of a male germ cell-specific 60S large ribosomal subunit (LSU), which contains RPL10L and RPL39L, instead of RPL10 and RPL39 paralogs. The composition of the rest of the complex is similar to classical ribosomes. Almost testis-specific. Also expressed in pre- and postmenopausal ovary.

It is found in the cytoplasm. Functionally, testis-specific component of the ribosome, which is required for the transition from prophase to metaphase in male meiosis I. Compensates for the inactivated X-linked RPL10 paralog during spermatogenesis. The ribosome is a large ribonucleoprotein complex responsible for the synthesis of proteins in the cell. The male germ cell-specific ribosome displays a ribosomal polypeptide exit tunnel of distinct size and charge states compared with the classical ribosome. It is responsible for regulating the biosynthesis and folding of a subset of male germ-cell-specific proteins that are essential for the formation of sperm. The polypeptide is Ribosomal protein uL16-like (Homo sapiens (Human)).